The chain runs to 85 residues: Toxin Cll7 (85 aa).

The signal sequence occupies residues 1 to 19 (MNSLLMITACLVLFGTVWA). Positions 20 to 83 (KEGYLVNTYT…TWPLPNKTCG (64 aa)) constitute an LCN-type CS-alpha/beta domain. Cystine bridges form between Cys-31–Cys-82, Cys-35–Cys-58, Cys-44–Cys-63, and Cys-48–Cys-65.

It belongs to the long (4 C-C) scorpion toxin superfamily. Sodium channel inhibitor family. Beta subfamily. Expressed by the venom gland.

Its subcellular location is the secreted. Beta toxins bind voltage-independently at site-4 of sodium channels (Nav) and shift the voltage of activation toward more negative potentials thereby affecting sodium channel activation and promoting spontaneous and repetitive firing. This chain is Toxin Cll7, found in Centruroides limpidus (Mexican scorpion).